We begin with the raw amino-acid sequence, 217 residues long: 3,4-dihydroxy-2-butanone 4-phosphate synthase (217 aa).

D-ribulose 5-phosphate contacts are provided by residues 37–38 (RE), Asp42, 150–154 (RRGHT), and Glu174. Glu38 is a Mg(2+) binding site. His153 is a binding site for Mg(2+).

This sequence belongs to the DHBP synthase family. As to quaternary structure, homodimer. Requires Mg(2+) as cofactor. Mn(2+) is required as a cofactor.

The enzyme catalyses D-ribulose 5-phosphate = (2S)-2-hydroxy-3-oxobutyl phosphate + formate + H(+). Its pathway is cofactor biosynthesis; riboflavin biosynthesis; 2-hydroxy-3-oxobutyl phosphate from D-ribulose 5-phosphate: step 1/1. Catalyzes the conversion of D-ribulose 5-phosphate to formate and 3,4-dihydroxy-2-butanone 4-phosphate. This is 3,4-dihydroxy-2-butanone 4-phosphate synthase from Shewanella baltica (strain OS223).